The following is a 70-amino-acid chain: Protein SlyX homolog (70 aa).

It belongs to the SlyX family.

In Shewanella baltica (strain OS155 / ATCC BAA-1091), this protein is Protein SlyX homolog.